Consider the following 174-residue polypeptide: MSLQRSEKEAVISEVSRLVAKAQTLVLAEYRGITVADMTKLRVQARSNGVRLSVLKNTLARRAVAGSAFDVLAGQMTGPLIYGFSEDAVAAAKVVAEFAKTNDKLVIRAGAFAGKALDVNGVKQLASIPSKEVLLAQLCGLLMSPISRTAVVLSALAAKKGEGEGVGQAQAVPA.

It belongs to the universal ribosomal protein uL10 family. As to quaternary structure, part of the ribosomal stalk of the 50S ribosomal subunit. The N-terminus interacts with L11 and the large rRNA to form the base of the stalk. The C-terminus forms an elongated spine to which L12 dimers bind in a sequential fashion forming a multimeric L10(L12)X complex.

Forms part of the ribosomal stalk, playing a central role in the interaction of the ribosome with GTP-bound translation factors. This chain is Large ribosomal subunit protein uL10, found in Verminephrobacter eiseniae (strain EF01-2).